The following is a 398-amino-acid chain: Serine/threonine-protein phosphatase 2A activator (398 aa).

Positions 137, 142, and 143 each coordinate ATP. 2 residues coordinate Mg(2+): Gly-197 and Asp-203. Residues Pro-293, Gln-296, and His-297 each coordinate ATP. A compositionally biased stretch (pro residues) spans Pro-343–Ala-352. The interval Pro-343–Glu-398 is disordered. The span at Asp-363–Ala-388 shows a compositional bias: low complexity.

This sequence belongs to the PTPA-type PPIase family. In terms of assembly, associates with PP2A heterodimeric core enzyme PP2A(D), composed of a catalytic subunit (subunit C) and a constant regulatory subunit (PR65 or subunit A). Interacts with the catalytic subunit Pp4-19C of the serine/threonine-protein phosphatase 4 (PP4) complex; thereby mediating basal localization of the Miranda (Mira) complex; probably by facilitating the dephosphorylation of Mira.

It is found in the cytoplasm. It localises to the nucleus. The catalysed reaction is [protein]-peptidylproline (omega=180) = [protein]-peptidylproline (omega=0). In terms of biological role, PPIases accelerate the folding of proteins. It catalyzes the cis-trans isomerization of proline imidic peptide bonds in oligopeptides. Acts as a regulatory subunit for serine/threonine-protein phosphatase 2A (PP2A). Modulates PP2A activity or substrate specificity, probably by inducing a conformational change in the catalytic subunit, a proposed direct target of the PPIase. Acts as mediator for the basal localization of the Miranda (Mira) complex during mitosis of larval neuroblast asymmetric division. Associates with the phosphatase 4 (PP4) complex to mediate basal localization of Mira; probably by facilitating the dephosphorylation of Mira. Cortical association of Mira mediated by the PTPA-PP4 complex seems to be independent of aPKC activity. The sequence is that of Serine/threonine-protein phosphatase 2A activator from Drosophila melanogaster (Fruit fly).